A 228-amino-acid chain; its full sequence is Thermonuclease (228 aa).

The signal sequence occupies residues 1–23 (MTEYLLSAGICMAIVSILLIGMA). The propeptide occupies 24 to 60 (ISNVSKGQYAKRFFYFATSCLVLTLVVVSSLSSSANA). The segment covering 58–70 (ANASQTDNGVNRS) has biased composition (polar residues). The disordered stretch occupies residues 58–83 (ANASQTDNGVNRSGSEDPTVYSATST). Aspartate 100 lines the Ca(2+) pocket. Arginine 114 is an active-site residue. Ca(2+) contacts are provided by aspartate 119 and threonine 120. Catalysis depends on residues glutamate 122 and arginine 166.

It belongs to the thermonuclease family. It depends on Ca(2+) as a cofactor.

It is found in the secreted. The catalysed reaction is Endonucleolytic cleavage to nucleoside 3'-phosphates and 3'-phosphooligonucleotide end-products.. Its function is as follows. Enzyme that catalyzes the hydrolysis of both DNA and RNA at the 5' position of the phosphodiester bond. This Staphylococcus aureus (strain COL) protein is Thermonuclease (nuc).